The following is a 315-amino-acid chain: tRNA dimethylallyltransferase (315 aa).

13 to 20 contacts ATP; that stretch reads GPTASGKT. 15 to 20 is a binding site for substrate; sequence TASGKT. Interaction with substrate tRNA stretches follow at residues 38-41, 162-166, and 245-250; these read DSAL, QRIQR, and RCVGYR.

The protein belongs to the IPP transferase family. In terms of assembly, monomer. Requires Mg(2+) as cofactor.

It catalyses the reaction adenosine(37) in tRNA + dimethylallyl diphosphate = N(6)-dimethylallyladenosine(37) in tRNA + diphosphate. Catalyzes the transfer of a dimethylallyl group onto the adenine at position 37 in tRNAs that read codons beginning with uridine, leading to the formation of N6-(dimethylallyl)adenosine (i(6)A). In Methylobacillus flagellatus (strain ATCC 51484 / DSM 6875 / VKM B-1610 / KT), this protein is tRNA dimethylallyltransferase.